A 430-amino-acid chain; its full sequence is Protein AST2 (430 aa).

Functionally, lipid raft-associated protein involved in the targeting of PMA1 from Golgi to the plasma membrane. May induce clustering of PMA1, which facilitates partition of PMA1 into lipid rafts after leaving the ER its and transport to the cell surface. This is Protein AST2 from Saccharomyces cerevisiae (strain ATCC 204508 / S288c) (Baker's yeast).